Consider the following 162-residue polypeptide: Phospholipase A and acyltransferase 3 (162 aa).

Residues Met-1 to Val-133 are Cytoplasmic-facing. The 117-residue stretch at Leu-13–Gln-129 folds into the LRAT domain. Catalysis depends on residues His-23 and His-35. Catalysis depends on Cys-113, which acts as the Acyl-thioester intermediate. A helical membrane pass occupies residues Ile-134–Phe-154. The Lumenal portion of the chain corresponds to Ser-155 to Gln-162.

The protein belongs to the H-rev107 family. As to quaternary structure, interacts with PPP2R1A; this interaction might decrease PP2A activity. Widely expressed. Low expression, if any, in hematopoietic cells and thymus. In testis, confined to round spermatids. Expressed in normal ovarian epithelial cells. Down-regulated in some ovarian carcinomas and testicular germ cell tumors. Highly expressed in white adipose tissue.

It is found in the cell membrane. Its subcellular location is the cytoplasm. It localises to the cytosol. The protein resides in the perinuclear region. The protein localises to the peroxisome membrane. It is found in the mitochondrion membrane. Its subcellular location is the nucleus envelope. It localises to the lysosome membrane. The protein resides in the endoplasmic reticulum membrane. The enzyme catalyses a 1,2-diacyl-sn-glycero-3-phosphocholine + H2O = a 1-acyl-sn-glycero-3-phosphocholine + a fatty acid + H(+). The catalysed reaction is a 1,2-diacyl-sn-glycero-3-phosphocholine + H2O = a 2-acyl-sn-glycero-3-phosphocholine + a fatty acid + H(+). It catalyses the reaction 1,2-dihexadecanoyl-sn-glycero-3-phosphocholine + H2O = 1-hexadecanoyl-sn-glycero-3-phosphocholine + hexadecanoate + H(+). It carries out the reaction 1,2-dihexadecanoyl-sn-glycero-3-phosphocholine + H2O = 2-hexadecanoyl-sn-glycero-3-phosphocholine + hexadecanoate + H(+). The enzyme catalyses 1-hexadecanoyl-2-(9Z-octadecenoyl)-sn-glycero-3-phosphocholine + H2O = 2-(9Z-octadecenoyl)-sn-glycero-3-phosphocholine + hexadecanoate + H(+). The catalysed reaction is 1-hexadecanoyl-2-(9Z-octadecenoyl)-sn-glycero-3-phosphocholine + H2O = 1-hexadecanoyl-sn-glycero-3-phosphocholine + (9Z)-octadecenoate + H(+). It catalyses the reaction 1-hexadecanoyl-2-(5Z,8Z,11Z,14Z-eicosatetraenoyl)-sn-glycero-3-phosphocholine + H2O = 1-hexadecanoyl-sn-glycero-3-phosphocholine + (5Z,8Z,11Z,14Z)-eicosatetraenoate + H(+). It carries out the reaction 1-hexadecanoyl-2-(5Z,8Z,11Z,14Z-eicosatetraenoyl)-sn-glycero-3-phosphocholine + H2O = 2-(5Z,8Z,11Z,14Z)-eicosatetraenoyl-sn-glycero-3-phosphocholine + hexadecanoate + H(+). The enzyme catalyses 1-hexadecanoyl-2-(9Z,12Z-octadecadienoyl)-sn-glycero-3-phosphoethanolamine + H2O = 1-hexadecanoyl-sn-glycero-3-phosphoethanolamine + (9Z,12Z)-octadecadienoate + H(+). The catalysed reaction is 1-hexadecanoyl-2-(9Z,12Z-octadecadienoyl)-sn-glycero-3-phosphoethanolamine + H2O = 2-(9Z,12Z)-octadecadienoyl-sn-glycero-3-phosphoethanolamine + hexadecanoate + H(+). It catalyses the reaction 1-hexadecanoyl-2-(5Z,8Z,11Z,14Z-eicosatetraenoyl)-sn-glycero-3-phosphoethanolamine + H2O = 1-hexadecanoyl-sn-glycero-3-phosphoethanolamine + (5Z,8Z,11Z,14Z)-eicosatetraenoate + H(+). It carries out the reaction 1-hexadecanoyl-2-(5Z,8Z,11Z,14Z-eicosatetraenoyl)-sn-glycero-3-phosphoethanolamine + H2O = 2-(5Z,8Z,11Z,14Z)-eicosatetraenoyl-sn-glycero-3-phosphoethanolamine + hexadecanoate + H(+). The enzyme catalyses 1-hexanoyl-2-acyl-sn-glycero-3-phosphocholine + H2O = hexanoate + a 2-acyl-sn-glycero-3-phosphocholine + H(+). The catalysed reaction is 1-hexanoyl-2-acyl-sn-glycero-3-phosphocholine + H2O = 1-hexanoyl-sn-glycero-3-phosphocholine + a fatty acid + H(+). It catalyses the reaction 1,2-diheptadecanoyl-sn-glycero-3-phosphoethanolamine + 1-(9Z-octadecenoyl)-2-hexadecanoyl-sn-glycero-3-phosphocholine = 1,2-diheptadecanoyl-sn-glycero-3-phospho-N-hexadecanoyl-ethanolamine + 1-(9Z-octadecenoyl)-sn-glycero-3-phosphocholine + H(+). It carries out the reaction 1,2-diheptadecanoyl-sn-glycero-3-phosphoethanolamine + 1-(9Z-octadecenoyl)-2-hexadecanoyl-sn-glycero-3-phosphocholine = 1,2-diheptadecanoyl-sn-glycero-3-phospho-N-(9Z-octadecenoyl)-ethanolamine + 2-hexadecanoyl-sn-glycero-3-phosphocholine + H(+). The enzyme catalyses 1,2-dihexanoyl-sn-glycero-3-phosphoethanolamine + 2-heptanoyl-sn-glycero-3-phosphocholine = hexanoyl-sn-glycero-3-phosphoethanolamine + 1-hexanoyl-2-heptanoyl-sn-glycero-3-phosphocholine. The catalysed reaction is 1-hexadecanoyl-2-octadecanoyl-sn-glycero-3-phosphocholine + H2O = octadecanoate + 1-hexadecanoyl-sn-glycero-3-phosphocholine + H(+). It catalyses the reaction 1-hexadecanoyl-2-octadecanoyl-sn-glycero-3-phosphocholine + H2O = 2-octadecanoyl-sn-glycero-3-phosphocholine + hexadecanoate + H(+). It carries out the reaction 1-octadecanoyl-2-hexadecanoyl-sn-glycero-3-phosphocholine + H2O = 1-octadecanoyl-sn-glycero-3-phosphocholine + hexadecanoate + H(+). The enzyme catalyses 1-octadecanoyl-2-hexadecanoyl-sn-glycero-3-phosphocholine + H2O = 2-hexadecanoyl-sn-glycero-3-phosphocholine + octadecanoate + H(+). The catalysed reaction is 1-hexadecanoyl-2-(9Z,12Z-octadecadienoyl)-sn-glycero-3-phosphocholine + H2O = (9Z,12Z)-octadecadienoate + 1-hexadecanoyl-sn-glycero-3-phosphocholine + H(+). It catalyses the reaction 1-hexadecanoyl-2-(9Z,12Z-octadecadienoyl)-sn-glycero-3-phosphocholine + H2O = 2-(9Z,12Z-octadecadienoyl)-sn-glycero-3-phosphocholine + hexadecanoate + H(+). It carries out the reaction 1,2-di-(9Z-octadecenoyl)-sn-glycero-3-phosphocholine + H2O = 2-(9Z-octadecenoyl)-sn-glycero-3-phosphocholine + (9Z)-octadecenoate + H(+). The enzyme catalyses 1,2-dihexadecanoyl-sn-glycero-3-phosphocholine + H2O = hexadecanoyl-sn-glycero-3-phosphocholine + hexadecanoate + H(+). The catalysed reaction is 1,2-di-(9Z-octadecenoyl)-sn-glycero-3-phosphocholine + H2O = 1-(9Z-octadecenoyl)-sn-glycero-3-phosphocholine + (9Z)-octadecenoate + H(+). It catalyses the reaction 1,2-di-(9Z-octadecenoyl)-sn-glycero-3-phosphoethanolamine + 1,2-dihexadecanoyl-sn-glycero-3-phosphocholine = hexadecanoyl-sn-glycero-3-phosphocholine + N-hexadecanoyl-1,2-di-(9Z-octadecenoyl)-sn-glycero-3-phosphoethanolamine + H(+). It carries out the reaction 1,2-di-(9Z,12Z-octadecadienoyl)-sn-glycero-3-phosphocholine + H2O = 1-(9Z,12Z)-octadecadienoyl-sn-glycero-3-phosphocholine + (9Z,12Z)-octadecadienoate + H(+). In terms of biological role, exhibits both phospholipase A1/2 and acyltransferase activities. Shows phospholipase A1 (PLA1) and A2 (PLA2) activity, catalyzing the calcium-independent release of fatty acids from the sn-1 or sn-2 position of glycerophospholipids. For most substrates, PLA1 activity is much higher than PLA2 activity. Shows O-acyltransferase activity,catalyzing the transfer of a fatty acyl group from glycerophospholipid to the hydroxyl group of lysophospholipid. Shows N-acyltransferase activity, catalyzing the calcium-independent transfer of a fatty acyl group at the sn-1 position of phosphatidylcholine (PC) and other glycerophospholipids to the primary amine of phosphatidylethanolamine (PE), forming N-acylphosphatidylethanolamine (NAPE), which serves as precursor for N-acylethanolamines (NAEs). Exhibits high N-acyltransferase activity and low phospholipase A1/2 activity. Required for complete organelle rupture and degradation that occur during eye lens terminal differentiation, when fiber cells that compose the lens degrade all membrane-bound organelles in order to provide lens with transparency to allow the passage of light. Organelle membrane degradation is probably catalyzed by the phospholipase activity. (Microbial infection) Acts as a host factor for picornaviruses: required during early infection to promote viral genome release into the cytoplasm. May act as a cellular sensor of membrane damage at sites of virus entry, which relocalizes to sites of membrane rupture upon virus unfection. Facilitates safe passage of the RNA away from LGALS8, enabling viral genome translation by host ribosome. May also be involved in initiating pore formation, increasing pore size or in maintaining pores for genome delivery. The lipid-modifying enzyme activity is required for this process. This is Phospholipase A and acyltransferase 3 from Homo sapiens (Human).